A 77-amino-acid polypeptide reads, in one-letter code: Sec-independent protein translocase protein TatA (77 aa).

A helical membrane pass occupies residues 1–21 (MGSFSIWHWLIVLVIVMLVFG). The tract at residues 50 to 77 (ADASTQQKISGGQTLEGEAREKVEKTHS) is disordered. Polar residues predominate over residues 53-62 (STQQKISGGQ). The segment covering 66-77 (GEAREKVEKTHS) has biased composition (basic and acidic residues).

This sequence belongs to the TatA/E family. The Tat system comprises two distinct complexes: a TatABC complex, containing multiple copies of TatA, TatB and TatC subunits, and a separate TatA complex, containing only TatA subunits. Substrates initially bind to the TatABC complex, which probably triggers association of the separate TatA complex to form the active translocon.

The protein resides in the cell inner membrane. Its function is as follows. Part of the twin-arginine translocation (Tat) system that transports large folded proteins containing a characteristic twin-arginine motif in their signal peptide across membranes. TatA could form the protein-conducting channel of the Tat system. This chain is Sec-independent protein translocase protein TatA, found in Azoarcus sp. (strain BH72).